A 101-amino-acid chain; its full sequence is Small ribosomal subunit protein uS14 (101 aa).

Belongs to the universal ribosomal protein uS14 family. In terms of assembly, part of the 30S ribosomal subunit. Contacts proteins S3 and S10.

In terms of biological role, binds 16S rRNA, required for the assembly of 30S particles and may also be responsible for determining the conformation of the 16S rRNA at the A site. This is Small ribosomal subunit protein uS14 from Zymomonas mobilis subsp. mobilis (strain ATCC 31821 / ZM4 / CP4).